The following is a 256-amino-acid chain: NAD(P)H-hydrate epimerase (256 aa).

A compositionally biased stretch (basic and acidic residues) spans 1–18 (MADPRRDPAAESKDRPST). The segment at 1–21 (MADPRRDPAAESKDRPSTERV) is disordered. The YjeF N-terminal domain maps to 23–229 (AYTADAVRAA…DLGLEPYLRR (207 aa)). Position 74–78 (74–78 (DNGGD)) interacts with (6S)-NADPHX. 2 residues coordinate K(+): N75 and D135. Residues 139-147 (GIGRLADRR) and D172 each bind (6S)-NADPHX. S175 contacts K(+).

This sequence belongs to the NnrE/AIBP family. It depends on K(+) as a cofactor.

It catalyses the reaction (6R)-NADHX = (6S)-NADHX. It carries out the reaction (6R)-NADPHX = (6S)-NADPHX. Its function is as follows. Catalyzes the epimerization of the S- and R-forms of NAD(P)HX, a damaged form of NAD(P)H that is a result of enzymatic or heat-dependent hydration. This is a prerequisite for the S-specific NAD(P)H-hydrate dehydratase to allow the repair of both epimers of NAD(P)HX. This Microbacterium testaceum (strain StLB037) protein is NAD(P)H-hydrate epimerase.